Reading from the N-terminus, the 174-residue chain is Crossover junction endodeoxyribonuclease RuvC (174 aa).

Active-site residues include Asp-16, Glu-76, and Asp-148. 3 residues coordinate Mg(2+): Asp-16, Glu-76, and Asp-148.

Belongs to the RuvC family. In terms of assembly, homodimer which binds Holliday junction (HJ) DNA. The HJ becomes 2-fold symmetrical on binding to RuvC with unstacked arms; it has a different conformation from HJ DNA in complex with RuvA. In the full resolvosome a probable DNA-RuvA(4)-RuvB(12)-RuvC(2) complex forms which resolves the HJ. Mg(2+) is required as a cofactor.

It localises to the cytoplasm. The catalysed reaction is Endonucleolytic cleavage at a junction such as a reciprocal single-stranded crossover between two homologous DNA duplexes (Holliday junction).. Its function is as follows. The RuvA-RuvB-RuvC complex processes Holliday junction (HJ) DNA during genetic recombination and DNA repair. Endonuclease that resolves HJ intermediates. Cleaves cruciform DNA by making single-stranded nicks across the HJ at symmetrical positions within the homologous arms, yielding a 5'-phosphate and a 3'-hydroxyl group; requires a central core of homology in the junction. The consensus cleavage sequence is 5'-(A/T)TT(C/G)-3'. Cleavage occurs on the 3'-side of the TT dinucleotide at the point of strand exchange. HJ branch migration catalyzed by RuvA-RuvB allows RuvC to scan DNA until it finds its consensus sequence, where it cleaves and resolves the cruciform DNA. The protein is Crossover junction endodeoxyribonuclease RuvC of Rhodopseudomonas palustris (strain BisA53).